Consider the following 140-residue polypeptide: MASPLRSLMLLLAVLAVAWAGTSRPPPRLLGAPQEADASEEGVQRALDFAVSEYNKGSNDAYHSRAIQVVRARKQLVAGINYYLDVEMGRTTCTKSQTNLTNCPFHDQPHLMRKALCSFQIYSVPWKGTHTLTKSSCKNA.

The first 20 residues, 1–20 (MASPLRSLMLLLAVLAVAWA), serve as a signal peptide directing secretion. The Secondary area of contact motif lies at 75–79 (QLVAG). Cystine bridges form between C93-C103 and C117-C137. The N-linked (GlcNAc...) asparagine glycan is linked to N99.

The protein belongs to the cystatin family.

The protein resides in the secreted. In terms of biological role, as an inhibitor of cysteine proteinases, this protein is thought to serve an important physiological role as a local regulator of this enzyme activity. Known to inhibit cathepsin B, H, and L. The protein is Cystatin-C (Cst3) of Rattus norvegicus (Rat).